The primary structure comprises 507 residues: ATP synthase subunit alpha, chloroplastic (507 aa).

ATP is bound at residue 170 to 177 (GDRQTGKT).

Belongs to the ATPase alpha/beta chains family. F-type ATPases have 2 components, CF(1) - the catalytic core - and CF(0) - the membrane proton channel. CF(1) has five subunits: alpha(3), beta(3), gamma(1), delta(1), epsilon(1). CF(0) has four main subunits: a, b, b' and c.

It is found in the plastid. The protein localises to the chloroplast thylakoid membrane. The enzyme catalyses ATP + H2O + 4 H(+)(in) = ADP + phosphate + 5 H(+)(out). Functionally, produces ATP from ADP in the presence of a proton gradient across the membrane. The alpha chain is a regulatory subunit. The polypeptide is ATP synthase subunit alpha, chloroplastic (Buxus microphylla (Littleleaf boxwood)).